A 278-amino-acid chain; its full sequence is 4-deoxy-L-threo-5-hexosulose-uronate ketol-isomerase (278 aa).

Residues H196, H198, E203, and H245 each coordinate Zn(2+).

It belongs to the KduI family. Requires Zn(2+) as cofactor.

It carries out the reaction 5-dehydro-4-deoxy-D-glucuronate = 3-deoxy-D-glycero-2,5-hexodiulosonate. The protein operates within glycan metabolism; pectin degradation; 2-dehydro-3-deoxy-D-gluconate from pectin: step 4/5. Functionally, catalyzes the isomerization of 5-dehydro-4-deoxy-D-glucuronate to 3-deoxy-D-glycero-2,5-hexodiulosonate. The sequence is that of 4-deoxy-L-threo-5-hexosulose-uronate ketol-isomerase from Shigella boydii serotype 4 (strain Sb227).